A 126-amino-acid polypeptide reads, in one-letter code: Glycine--tRNA ligase beta subunit (126 aa).

This sequence belongs to the class-II aminoacyl-tRNA synthetase family. Tetramer of two alpha and two beta subunits.

It is found in the cytoplasm. It catalyses the reaction tRNA(Gly) + glycine + ATP = glycyl-tRNA(Gly) + AMP + diphosphate. This chain is Glycine--tRNA ligase beta subunit (glyS), found in Neisseria gonorrhoeae.